A 639-amino-acid polypeptide reads, in one-letter code: 3D-(3,5/4)-trihydroxycyclohexane-1,2-dione hydrolase (639 aa).

Position 62 (Glu-62) interacts with thiamine diphosphate. Positions 438 to 518 (SLPGDLQRMW…INILLFDNCG (81 aa)) are thiamine pyrophosphate binding. Mg(2+) contacts are provided by Asp-489 and Asn-516.

The protein belongs to the TPP enzyme family. The cofactor is Mg(2+). Requires thiamine diphosphate as cofactor.

The catalysed reaction is 3D-3,5/4-trihydroxycyclohexane-1,2-dione + H2O = 5-deoxy-D-glucuronate + H(+). Its pathway is polyol metabolism; myo-inositol degradation into acetyl-CoA; acetyl-CoA from myo-inositol: step 3/7. In terms of biological role, involved in the cleavage of the C1-C2 bond of 3D-(3,5/4)-trihydroxycyclohexane-1,2-dione (THcHDO) to yield 5-deoxy-glucuronate (5DG). In Clostridium perfringens (strain 13 / Type A), this protein is 3D-(3,5/4)-trihydroxycyclohexane-1,2-dione hydrolase.